The sequence spans 357 residues: Ribosomal RNA large subunit methyltransferase M (357 aa).

S-adenosyl-L-methionine-binding positions include serine 183, 216-219 (APGG), aspartate 235, aspartate 255, and aspartate 271. Residue lysine 300 is the Proton acceptor of the active site.

Belongs to the class I-like SAM-binding methyltransferase superfamily. RNA methyltransferase RlmE family. RlmM subfamily. As to quaternary structure, monomer.

It localises to the cytoplasm. It catalyses the reaction cytidine(2498) in 23S rRNA + S-adenosyl-L-methionine = 2'-O-methylcytidine(2498) in 23S rRNA + S-adenosyl-L-homocysteine + H(+). In terms of biological role, catalyzes the 2'-O-methylation at nucleotide C2498 in 23S rRNA. In Pseudomonas fluorescens (strain Pf0-1), this protein is Ribosomal RNA large subunit methyltransferase M.